A 140-amino-acid polypeptide reads, in one-letter code: Nucleoside diphosphate kinase (140 aa).

ATP is bound by residues Lys-11, Phe-59, Arg-87, Thr-93, Arg-104, and Asn-114. His-117 serves as the catalytic Pros-phosphohistidine intermediate.

The protein belongs to the NDK family. Homotetramer. Mg(2+) is required as a cofactor.

The protein localises to the cytoplasm. It carries out the reaction a 2'-deoxyribonucleoside 5'-diphosphate + ATP = a 2'-deoxyribonucleoside 5'-triphosphate + ADP. The enzyme catalyses a ribonucleoside 5'-diphosphate + ATP = a ribonucleoside 5'-triphosphate + ADP. Its function is as follows. Major role in the synthesis of nucleoside triphosphates other than ATP. The ATP gamma phosphate is transferred to the NDP beta phosphate via a ping-pong mechanism, using a phosphorylated active-site intermediate. This Rhodopseudomonas palustris (strain HaA2) protein is Nucleoside diphosphate kinase.